The following is a 391-amino-acid chain: Protein-glutamate methylesterase/protein-glutamine glutaminase (391 aa).

One can recognise a Response regulatory domain in the interval 4-121; it reads KVLVVDDSSF…ARNNEDAIKL (118 aa). D55 is modified (4-aspartylphosphate). A CheB-type methylesterase domain is found at 197-391; it reads SGKHYQLVAI…IRLKTEVGCG (195 aa). Residues S209, H236, and D333 contribute to the active site.

Belongs to the CheB family. Phosphorylated by CheA. Phosphorylation of the N-terminal regulatory domain activates the methylesterase activity.

The protein localises to the cytoplasm. It catalyses the reaction [protein]-L-glutamate 5-O-methyl ester + H2O = L-glutamyl-[protein] + methanol + H(+). The enzyme catalyses L-glutaminyl-[protein] + H2O = L-glutamyl-[protein] + NH4(+). Involved in chemotaxis. Part of a chemotaxis signal transduction system that modulates chemotaxis in response to various stimuli. Catalyzes the demethylation of specific methylglutamate residues introduced into the chemoreceptors (methyl-accepting chemotaxis proteins or MCP) by CheR. Also mediates the irreversible deamidation of specific glutamine residues to glutamic acid. The polypeptide is Protein-glutamate methylesterase/protein-glutamine glutaminase (Pseudoalteromonas translucida (strain TAC 125)).